The primary structure comprises 244 residues: Probable histone-lysine N-methyltransferase set-23 (244 aa).

Positions 25–86 constitute a Pre-SET domain; that stretch reads EGCNCEAECS…SCRNRVVQCG (62 aa). Zn(2+) is bound by residues Cys-27, Cys-29, Cys-33, Cys-39, Cys-41, Cys-65, Cys-69, Cys-71, and Cys-78. The SET domain maps to 89–213; sequence KKLEIFSTCE…RGEELCYDYG (125 aa). S-adenosyl-L-methionine is bound by residues 101-103, Asp-141, Tyr-143, Arg-170, and 173-174; these read KGF and NH. Zn(2+) contacts are provided by Cys-176, Cys-225, Cys-227, and Cys-232. Residues 221-237 enclose the Post-SET domain; it reads NRKLCLCKSEKCRKYLP.

The protein belongs to the class V-like SAM-binding methyltransferase superfamily. Histone-lysine methyltransferase family. Suvar3-9 subfamily.

It is found in the nucleus. It localises to the chromosome. The catalysed reaction is L-lysyl-[histone] + S-adenosyl-L-methionine = N(6)-methyl-L-lysyl-[histone] + S-adenosyl-L-homocysteine + H(+). Probable histone methyltransferase. Required for embryonic development. In Caenorhabditis elegans, this protein is Probable histone-lysine N-methyltransferase set-23 (set-23).